An 874-amino-acid chain; its full sequence is Leucine--tRNA ligase (874 aa).

Positions 47 to 57 match the 'HIGH' region motif; that stretch reads PYPSGKLHMGH. A 'KMSKS' region motif is present at residues 636 to 640; it reads KMSKS. Residue K639 coordinates ATP.

Belongs to the class-I aminoacyl-tRNA synthetase family.

It is found in the cytoplasm. It catalyses the reaction tRNA(Leu) + L-leucine + ATP = L-leucyl-tRNA(Leu) + AMP + diphosphate. This is Leucine--tRNA ligase from Acinetobacter baumannii (strain SDF).